Here is a 415-residue protein sequence, read N- to C-terminus: Serine hydroxymethyltransferase (415 aa).

(6S)-5,6,7,8-tetrahydrofolate is bound by residues L117 and 121–123; that span reads GHL. K226 carries the post-translational modification N6-(pyridoxal phosphate)lysine. Position 241 (E241) interacts with (6S)-5,6,7,8-tetrahydrofolate.

Belongs to the SHMT family. Homodimer. Requires pyridoxal 5'-phosphate as cofactor.

It is found in the cytoplasm. The enzyme catalyses (6R)-5,10-methylene-5,6,7,8-tetrahydrofolate + glycine + H2O = (6S)-5,6,7,8-tetrahydrofolate + L-serine. It participates in one-carbon metabolism; tetrahydrofolate interconversion. Its pathway is amino-acid biosynthesis; glycine biosynthesis; glycine from L-serine: step 1/1. Functionally, catalyzes the reversible interconversion of serine and glycine with tetrahydrofolate (THF) serving as the one-carbon carrier. This reaction serves as the major source of one-carbon groups required for the biosynthesis of purines, thymidylate, methionine, and other important biomolecules. Also exhibits THF-independent aldolase activity toward beta-hydroxyamino acids, producing glycine and aldehydes, via a retro-aldol mechanism. The protein is Serine hydroxymethyltransferase of Bacillus pumilus (strain SAFR-032).